The following is a 373-amino-acid chain: P2Y purinoceptor 1 (373 aa).

The Extracellular segment spans residues 1–51; the sequence is MTEVPWSVVPNGTDAAFLAGLGSLWGNSTVASTAAVSSSFQCALTKTGFQF. N-linked (GlcNAc...) asparagine glycans are attached at residues Asn-11 and Asn-27. Intrachain disulfides connect Cys-42–Cys-296 and Cys-124–Cys-202. ADP is bound at residue Lys-46. Residues 52–74 traverse the membrane as a helical segment; that stretch reads YYLPAVYILVFIIGFLGNSVAIW. Topologically, residues 75–87 are cytoplasmic; the sequence is MFVFHMKPWSGIS. Residues 88–109 traverse the membrane as a helical segment; that stretch reads VYMFNLALADFLYVLTLPALIF. Topologically, residues 110–125 are extracellular; the sequence is YYFNKTDWIFGDAMCK. Residue Asn-113 is glycosylated (N-linked (GlcNAc...) asparagine). Residues 126 to 147 form a helical membrane-spanning segment; it reads LQRFIFHVNLYGSILFLTCISA. Residues 148 to 166 lie on the Cytoplasmic side of the membrane; that stretch reads HRYSGVVYPLKSLGRLKKK. The helical transmembrane segment at 167 to 188 threads the bilayer; sequence NAIYVSVLVWLIVVVAISPILF. Residues 189 to 214 lie on the Extracellular side of the membrane; it reads YSGTGTRKNKTVTCYDTTSNDYLRSY. N-linked (GlcNAc...) asparagine glycosylation occurs at Asn-197. 203–205 is an ADP binding site; sequence YDT. The chain crosses the membrane as a helical span at residues 215-237; the sequence is FIYSMCTTVAMFCIPLVLILGCY. The Cytoplasmic portion of the chain corresponds to 238–260; it reads GLIVKALIYNDLDNSPLRRKSIY. The helical transmembrane segment at 261–284 threads the bilayer; that stretch reads LVIIVLTVFAVSYIPFHVMKTMNL. ADP contacts are provided by residues 283–287, 303–306, and Arg-310; these read NLRAR and YATY. At 285–303 the chain is on the extracellular side; that stretch reads RARLDFQTPEMCDFNDRVY. The helical transmembrane segment at 304–325 threads the bilayer; the sequence is ATYQVTRGLASLNSCVDPILYF. Residues 326–373 lie on the Cytoplasmic side of the membrane; sequence LAGDTFRRRLSRATRKASRRSEANLQSKSEEMTLNILSEFKQNGDTSL.

Belongs to the G-protein coupled receptor 1 family.

The protein localises to the cell membrane. Its function is as follows. Receptor for extracellular adenine nucleotides such as ADP. In platelets, binding to ADP leads to mobilization of intracellular calcium ions via activation of phospholipase C, a change in platelet shape, and ultimately platelet aggregation. The sequence is that of P2Y purinoceptor 1 (P2ry1) from Mus musculus (Mouse).